Here is a 35-residue protein sequence, read N- to C-terminus: Photosystem II reaction center protein M (35 aa).

The chain crosses the membrane as a helical span at residues Gly7 to Val27.

It belongs to the PsbM family. In terms of assembly, PSII is composed of 1 copy each of membrane proteins PsbA, PsbB, PsbC, PsbD, PsbE, PsbF, PsbH, PsbI, PsbJ, PsbK, PsbL, PsbM, PsbT, PsbX, PsbY, PsbZ, Psb30/Ycf12, peripheral proteins PsbO, CyanoQ (PsbQ), PsbU, PsbV and a large number of cofactors. It forms dimeric complexes.

It is found in the cellular thylakoid membrane. Functionally, one of the components of the core complex of photosystem II (PSII). PSII is a light-driven water:plastoquinone oxidoreductase that uses light energy to abstract electrons from H(2)O, generating O(2) and a proton gradient subsequently used for ATP formation. It consists of a core antenna complex that captures photons, and an electron transfer chain that converts photonic excitation into a charge separation. This subunit is found at the monomer-monomer interface. The protein is Photosystem II reaction center protein M of Synechococcus sp. (strain JA-3-3Ab) (Cyanobacteria bacterium Yellowstone A-Prime).